We begin with the raw amino-acid sequence, 305 residues long: Beta-lactamase ROB-1 (305 aa).

The N-terminal stretch at M1 to A33 is a signal peptide. S86 (acyl-ester intermediate) is an active-site residue. K248–G250 is a substrate binding site.

Belongs to the class-A beta-lactamase family.

The enzyme catalyses a beta-lactam + H2O = a substituted beta-amino acid. This is Beta-lactamase ROB-1 (rob1) from Actinobacillus pleuropneumoniae (Haemophilus pleuropneumoniae).